The sequence spans 264 residues: S-adenosylmethionine decarboxylase proenzyme (264 aa).

Residue Ser-113 is the Schiff-base intermediate with substrate; via pyruvic acid of the active site. Ser-113 carries the pyruvic acid (Ser); by autocatalysis modification. His-118 acts as the Proton acceptor; for processing activity in catalysis. Cys-141 (proton donor; for catalytic activity) is an active-site residue.

This sequence belongs to the prokaryotic AdoMetDC family. Type 2 subfamily. Heterooctamer of four alpha and four beta chains arranged as a tetramer of alpha/beta heterodimers. Requires pyruvate as cofactor. Is synthesized initially as an inactive proenzyme. Formation of the active enzyme involves a self-maturation process in which the active site pyruvoyl group is generated from an internal serine residue via an autocatalytic post-translational modification. Two non-identical subunits are generated from the proenzyme in this reaction, and the pyruvate is formed at the N-terminus of the alpha chain, which is derived from the carboxyl end of the proenzyme. The post-translation cleavage follows an unusual pathway, termed non-hydrolytic serinolysis, in which the side chain hydroxyl group of the serine supplies its oxygen atom to form the C-terminus of the beta chain, while the remainder of the serine residue undergoes an oxidative deamination to produce ammonia and the pyruvoyl group blocking the N-terminus of the alpha chain.

The catalysed reaction is S-adenosyl-L-methionine + H(+) = S-adenosyl 3-(methylsulfanyl)propylamine + CO2. The protein operates within amine and polyamine biosynthesis; S-adenosylmethioninamine biosynthesis; S-adenosylmethioninamine from S-adenosyl-L-methionine: step 1/1. Catalyzes the decarboxylation of S-adenosylmethionine to S-adenosylmethioninamine (dcAdoMet), the propylamine donor required for the synthesis of the polyamines spermine and spermidine from the diamine putrescine. The protein is S-adenosylmethionine decarboxylase proenzyme of Pseudomonas paraeruginosa (strain DSM 24068 / PA7) (Pseudomonas aeruginosa (strain PA7)).